The following is a 138-amino-acid chain: Large ribosomal subunit protein mL54 (138 aa).

A mitochondrion-targeting transit peptide spans 1–16; the sequence is MAARRLFGATGSWARW.

Belongs to the mitochondrion-specific ribosomal protein mL54 family. In terms of assembly, component of the mitochondrial ribosome large subunit (39S) which comprises a 16S rRNA and about 50 distinct proteins.

It localises to the mitochondrion. The protein is Large ribosomal subunit protein mL54 (MRPL54) of Bos taurus (Bovine).